The sequence spans 421 residues: 4-hydroxy-3-methylbut-2-en-1-yl diphosphate synthase (flavodoxin) (421 aa).

Residues cysteine 298, cysteine 301, cysteine 344, and glutamate 351 each contribute to the [4Fe-4S] cluster site.

The protein belongs to the IspG family. Requires [4Fe-4S] cluster as cofactor.

The enzyme catalyses (2E)-4-hydroxy-3-methylbut-2-enyl diphosphate + oxidized [flavodoxin] + H2O + 2 H(+) = 2-C-methyl-D-erythritol 2,4-cyclic diphosphate + reduced [flavodoxin]. Its pathway is isoprenoid biosynthesis; isopentenyl diphosphate biosynthesis via DXP pathway; isopentenyl diphosphate from 1-deoxy-D-xylulose 5-phosphate: step 5/6. Functionally, converts 2C-methyl-D-erythritol 2,4-cyclodiphosphate (ME-2,4cPP) into 1-hydroxy-2-methyl-2-(E)-butenyl 4-diphosphate. The chain is 4-hydroxy-3-methylbut-2-en-1-yl diphosphate synthase (flavodoxin) from Neisseria meningitidis serogroup B (strain ATCC BAA-335 / MC58).